A 698-amino-acid polypeptide reads, in one-letter code: Glycine--tRNA ligase beta subunit (698 aa).

This sequence belongs to the class-II aminoacyl-tRNA synthetase family. In terms of assembly, tetramer of two alpha and two beta subunits.

The protein resides in the cytoplasm. It carries out the reaction tRNA(Gly) + glycine + ATP = glycyl-tRNA(Gly) + AMP + diphosphate. The protein is Glycine--tRNA ligase beta subunit of Xanthomonas campestris pv. campestris (strain B100).